A 912-amino-acid chain; its full sequence is DNA ligase 4 (912 aa).

ATP-binding residues include Glu-271, Thr-272, Lys-273, Leu-274, Arg-278, Glu-331, Lys-345, Phe-367, Glu-427, Lys-432, Lys-449, and Lys-451. Catalysis depends on Lys-273, which acts as the N6-AMP-lysine intermediate. Glu-331 contacts Mg(2+). Glu-427 is a Mg(2+) binding site. Residues 610–620 form a required for catalytic activity region; it reads LATKHLHVGDD. 2 BRCT domains span residues 654 to 743 and 846 to 912; these read KVSN…PRFM and LRFH…QYLL.

The protein belongs to the ATP-dependent DNA ligase family. Interacts with XRCC4; the LIG4-XRCC4 subcomplex has a 1:2 stoichiometry and XRCC4 is required for LIG4 stability. Component of the core long-range non-homologous end joining (NHEJ) complex (also named DNA-PK complex) composed of PRKDC, LIG4, XRCC4, XRCC6/Ku70, XRCC5/Ku86 and NHEJ1/XLF. Additional component of the NHEJ complex includes PAXX. Following autophosphorylation, PRKDC dissociates from DNA, leading to formation of the short-range NHEJ complex, composed of LIG4, XRCC4, XRCC6/Ku70, XRCC5/Ku86 and NHEJ1/XLF. Interacts with DCLRE1C; the interaction is direct. Interacts with APLF. Mg(2+) is required as a cofactor.

Its subcellular location is the nucleus. The enzyme catalyses ATP + (deoxyribonucleotide)n-3'-hydroxyl + 5'-phospho-(deoxyribonucleotide)m = (deoxyribonucleotide)n+m + AMP + diphosphate.. In terms of biological role, DNA ligase involved in DNA non-homologous end joining (NHEJ); required for double-strand break (DSB) repair and V(D)J recombination. Catalyzes the NHEJ ligation step of the broken DNA during DSB repair by resealing the DNA breaks after the gap filling is completed. Joins single-strand breaks in a double-stranded polydeoxynucleotide in an ATP-dependent reaction. LIG4 is mechanistically flexible: it can ligate nicks as well as compatible DNA overhangs alone, while in the presence of XRCC4, it can ligate ends with 2-nucleotides (nt) microhomology and 1-nt gaps. Forms a subcomplex with XRCC4; the LIG4-XRCC4 subcomplex is responsible for the NHEJ ligation step and XRCC4 enhances the joining activity of LIG4. Binding of the LIG4-XRCC4 complex to DNA ends is dependent on the assembly of the DNA-dependent protein kinase complex DNA-PK to these DNA ends. LIG4 regulates nuclear localization of XRCC4. In Cricetulus griseus (Chinese hamster), this protein is DNA ligase 4.